We begin with the raw amino-acid sequence, 241 residues long: dTTP/UTP pyrophosphatase (241 aa).

Ser-38 carries the post-translational modification Phosphoserine. Asp-105 acts as the Proton acceptor in catalysis.

This sequence belongs to the Maf family. YhdE subfamily. It depends on a divalent metal cation as a cofactor.

It localises to the cytoplasm. The protein resides in the nucleus. The catalysed reaction is dTTP + H2O = dTMP + diphosphate + H(+). It catalyses the reaction UTP + H2O = UMP + diphosphate + H(+). Functionally, nucleoside triphosphate pyrophosphatase that hydrolyzes dTTP and UTP. May have a dual role in cell division arrest and in preventing the incorporation of modified nucleotides into cellular nucleic acids. This Schizosaccharomyces pombe (strain 972 / ATCC 24843) (Fission yeast) protein is dTTP/UTP pyrophosphatase.